The primary structure comprises 109 residues: MDLDLNNRMTEDETLEKAYDIFLELASFNLDPADILLFSLQFEIRGGAELLPPSDGWLKHVDFNPNPDFFAEVIIGLAESEDAEINDVFARILICREKSHPIYHILWKE.

The protein belongs to the putative dsDNA mimic protein family.

In terms of biological role, may act as a double-stranded DNA (dsDNA) mimic. Probably regulates the activity of a dsDNA-binding protein. The sequence is that of Putative double-stranded DNA mimic protein plu2488 from Photorhabdus laumondii subsp. laumondii (strain DSM 15139 / CIP 105565 / TT01) (Photorhabdus luminescens subsp. laumondii).